We begin with the raw amino-acid sequence, 637 residues long: Chaperone protein HtpG (637 aa).

The a; substrate-binding stretch occupies residues methionine 1–arginine 345. Residues glutamate 346 to lysine 562 form a b region. Residues leucine 563 to lysine 637 form a c region.

It belongs to the heat shock protein 90 family. Homodimer.

It is found in the cytoplasm. Functionally, molecular chaperone. Has ATPase activity. The chain is Chaperone protein HtpG from Shewanella oneidensis (strain ATCC 700550 / JCM 31522 / CIP 106686 / LMG 19005 / NCIMB 14063 / MR-1).